Consider the following 138-residue polypeptide: Large ribosomal subunit protein uL16 (138 aa).

The protein belongs to the universal ribosomal protein uL16 family. As to quaternary structure, part of the 50S ribosomal subunit.

Binds 23S rRNA and is also seen to make contacts with the A and possibly P site tRNAs. The polypeptide is Large ribosomal subunit protein uL16 (Mycoplasmoides gallisepticum (strain R(low / passage 15 / clone 2)) (Mycoplasma gallisepticum)).